The following is a 2303-amino-acid chain: Adenomatous polyposis coli protein 2 (2303 aa).

Residues 8 to 59 (YEQLVRQVEALKAENSHLRQELRDNSSHLSKLETETSGMKEVLKHLQGKLEQ) adopt a coiled-coil conformation. Disordered stretches follow at residues 94–120 (PTLG…KDSF) and 247–270 (VPVD…QPGN). 6 ARM repeats span residues 302–341 (PESC…PGAK), 479–518 (ANKA…NLSW), 522–562 (INSK…NLSA), 566–609 (ENKA…NVSS), 615–654 (EDYR…NLSA), and 657–696 (ARDQ…NLLA). Disordered regions lie at residues 744–764 (KQGP…LRHL) and 816–835 (LART…DTSG). Positions 825–834 (GGKEAEKDTS) are enriched in basic and acidic residues. Residues 840 to 864 (AAKAKAKLALAVARIDQLVEDISAL) adopt a coiled-coil conformation. 4 disordered regions span residues 867–908 (SSDD…AGSR), 953–986 (RRED…ATSA), 1069–1152 (RCSS…ENYV), and 1173–1228 (SPSI…EATQ). The segment covering 869 to 878 (DDSFSLSSGD) has biased composition (low complexity). Copy 1 of the repeat occupies 1058 to 1077 (LAAQEGPLSLSRCSSLSSLS). A 5 X 20 AA approximate repeat of F-X-V-E-X-T-P-X-C-F-S-R-X-S-S-L-S-S-L-S region spans residues 1058–1587 (LAAQEGPLSL…SLSSSASSLS (530 aa)). Residues 1058 to 1587 (LAAQEGPLSL…SLSSSASSLS (530 aa)) are interaction with CTNNB1. The segment covering 1069-1084 (RCSSLSSLSSAGRPGP) has biased composition (low complexity). Residues 1088–1101 (GDLDDSDSSLEGLE) are compositionally biased toward acidic residues. Residues 1143–1152 (TPSSSSENYV) show a composition bias toward polar residues. Copy 2 of the repeat occupies 1150-1169 (NYVQETPLVLSRCSSVSSLG). Over residues 1173–1186 (SPSIASSIPSEPCS) the composition is skewed to low complexity. The span at 1202 to 1212 (PGQTMPPSRSK) shows a compositional bias: polar residues. The stretch at 1263-1282 (FTVEKPDENFSCASSLSALA) is repeat 3. Disordered regions lie at residues 1307–1335 (GAGG…PRGA), 1382–1497 (PAQE…QSLC), 1510–1684 (YGND…LDSV), 1724–2031 (LSVG…RGRP), and 2046–2232 (LRAA…DVDG). The segment covering 1390–1410 (TDSAEGTPVNFSSAASLSDET) has biased composition (polar residues). The stretch at 1391–1410 (DSAEGTPVNFSSAASLSDET) is repeat 4. Composition is skewed to basic and acidic residues over residues 1477 to 1489 (ADKD…RTRG) and 1537 to 1548 (FTRERPQGRKEA). Residues 1568–1587 (LIADETPPCYSLSSSASSLS) form repeat 5. The segment covering 1578-1589 (SLSSSASSLSEP) has biased composition (low complexity). Residues Ser-1585 and Ser-1587 each carry the phosphoserine modification. The segment covering 1638–1654 (PRRRPPVSGLRRRKPRA) has biased composition (basic residues). 2 stretches are compositionally biased toward basic and acidic residues: residues 1655–1671 (TRLD…RGEE) and 1739–1755 (RQAE…EKRG). Residues 1819–1830 (APPCLAQPAAPA) are compositionally biased toward low complexity. A required for localization to microtubules and function in microtubule stabilization region spans residues 1821-1900 (PCLAQPAAPA…PPVTQAAGAL (80 aa)). Over residues 1851-1860 (ELATLSQPPR) the composition is skewed to polar residues. 5 stretches are compositionally biased toward low complexity: residues 1868–1886 (LAKT…SQPL), 1971–1984 (GLVR…SGSE), 2011–2026 (LSSA…GASP), 2049–2062 (APRQ…QRPP), and 2113–2123 (GAVPAAPASAD). The segment at 2067-2144 (SPGERPARRT…PLPRVAAPGT (78 aa)) is interaction with MAPRE1 and MAPRE3. The segment covering 2124–2135 (AARRSSDGEPRP) has biased composition (basic and acidic residues). The segment covering 2200 to 2209 (KTNSSTSPSL) has biased composition (polar residues).

Belongs to the adenomatous polyposis coli (APC) family. Interacts with PSRC1. Interacts with APC. Interacts with CTNNB1. Interacts with MAPRE1 and MAPRE3. Interacts with TP53BP. Interacts possibly with AXIN2. Widely expressed (at protein level). Specifically expressed in the CNS.

It is found in the cytoplasm. Its subcellular location is the cytoskeleton. It localises to the golgi apparatus. The protein localises to the perinuclear region. Functionally, stabilizes microtubules and may regulate actin fiber dynamics through the activation of Rho family GTPases. May also function in Wnt signaling by promoting the rapid degradation of CTNNB1. The protein is Adenomatous polyposis coli protein 2 of Homo sapiens (Human).